The primary structure comprises 973 residues: Sensor histidine kinase TmoS (973 aa).

In terms of domain architecture, PAS 1 spans 32 to 103 (REELARIIFD…NQKRLVEAAS (72 aa)). The PAC 1 domain occupies 108–162 (VRCDIEILGKSGGREVIAVDFSLLPIRDEQENIVFLLAEGRNITDKKKAEAMLAL). The Histidine kinase 1 domain maps to 187 to 405 (KVSHELRTPL…LFQVKLPLNA (219 aa)). H190 carries the phosphohistidine; by autocatalysis modification. The Response regulatory domain maps to 452 to 567 (RVLIVEDNPD…ELRARVSNLI (116 aa)). At D500 the chain carries 4-aspartylphosphate. Residues 611–681 (SEARWKAVYE…QRLARLLQSG (71 aa)) form the PAS 2 domain. The 53-residue stretch at 685 to 737 (YSVECSYLCKNGSTIWANASVSLMSPRVDEPQVILQIIDDITEKKQAQETLNQ) folds into the PAC 2 domain. The Histidine kinase 2 domain occupies 757–973 (YIAHEINQPL…ACFFVSIPVS (217 aa)). Phosphohistidine is present on H760.

In terms of processing, autophosphorylated. Activation requires a sequential transfer of a phosphate group from a His in the primary transmitter domain, to an Asp in the receiver domain and to a His in the secondary transmitter domain.

Its subcellular location is the cytoplasm. The enzyme catalyses ATP + protein L-histidine = ADP + protein N-phospho-L-histidine.. With respect to regulation, activity is regulated by agonists and antagonists. Binding of agonists such as toluene or benzene to TmoS stimulates autophosphorylation. Toluene causes the most pronounced increase, followed by benzene, chlorobenzene and ethylbenzene. Activity is inhibited by antagonists such as o-xylene, o-chlorotoluene and trimethylbenzene isomers, which bind to TmoS but do not stimulate autophosphorylation. Member of the two-component regulatory system TmoS/TmoT involved in the regulation of toluene degradation. Probably phosphorylates TmoT via a four-step phosphorelay in response to toluene. Can also be induced by benzene and ethylbenzene. In Ectopseudomonas mendocina (Pseudomonas mendocina), this protein is Sensor histidine kinase TmoS (tmoS).